Reading from the N-terminus, the 106-residue chain is 3-phenylpropionate/cinnamic acid dioxygenase ferredoxin subunit (106 aa).

The region spanning 4 to 99 (IYACPVADVP…VHVEGSDIFI (96 aa)) is the Rieske domain. Residues C42, H44, C62, and H65 each contribute to the [2Fe-2S] cluster site.

It belongs to the bacterial ring-hydroxylating dioxygenase ferredoxin component family. In terms of assembly, this dioxygenase system consists of four proteins: the two subunits of the hydroxylase component (HcaE and HcaF), a ferredoxin (HcaC) and a ferredoxin reductase (HcaD). Requires [2Fe-2S] cluster as cofactor.

Its pathway is aromatic compound metabolism; 3-phenylpropanoate degradation. Its function is as follows. Part of the multicomponent 3-phenylpropionate dioxygenase, that converts 3-phenylpropionic acid (PP) and cinnamic acid (CI) into 3-phenylpropionate-dihydrodiol (PP-dihydrodiol) and cinnamic acid-dihydrodiol (CI-dihydrodiol), respectively. This protein seems to be a 2Fe-2S ferredoxin. The polypeptide is 3-phenylpropionate/cinnamic acid dioxygenase ferredoxin subunit (Shigella boydii serotype 4 (strain Sb227)).